A 455-amino-acid chain; its full sequence is tRNA modification GTPase MnmE (455 aa).

The (6S)-5-formyl-5,6,7,8-tetrahydrofolate site is built by R24, E81, and K121. The region spanning 217–378 (GMKVVIAGRP…LKEHLKDIMG (162 aa)) is the TrmE-type G domain. K(+) is bound at residue N227. GTP is bound by residues 227-232 (NAGKSS), 246-252 (TDIAGTT), 271-274 (DTAG), and 336-339 (NKAD). S231 is a Mg(2+) binding site. K(+) is bound by residues T246, I248, and T251. T252 is a binding site for Mg(2+). K455 contacts (6S)-5-formyl-5,6,7,8-tetrahydrofolate.

It belongs to the TRAFAC class TrmE-Era-EngA-EngB-Septin-like GTPase superfamily. TrmE GTPase family. In terms of assembly, homodimer. Heterotetramer of two MnmE and two MnmG subunits. It depends on K(+) as a cofactor.

It is found in the cytoplasm. Functionally, exhibits a very high intrinsic GTPase hydrolysis rate. Involved in the addition of a carboxymethylaminomethyl (cmnm) group at the wobble position (U34) of certain tRNAs, forming tRNA-cmnm(5)s(2)U34. This Psychromonas ingrahamii (strain DSM 17664 / CCUG 51855 / 37) protein is tRNA modification GTPase MnmE.